Reading from the N-terminus, the 170-residue chain is Photosystem I assembly protein Ycf3 (170 aa).

3 TPR repeats span residues 35–68 (AFTYYRDGMSAQAEGEYAEALQNYYEAMRLEVDA), 72–105 (SYILYNIGLIHTSNGEHGRALEYYYQALERNPSL), and 120–153 (GEQAIENGQSEISQILFEKAADYWKEAIRLAPTN).

This sequence belongs to the Ycf3 family.

The protein resides in the plastid. It localises to the chloroplast thylakoid membrane. Functionally, essential for the assembly of the photosystem I (PSI) complex. May act as a chaperone-like factor to guide the assembly of the PSI subunits. This chain is Photosystem I assembly protein Ycf3, found in Tetradesmus obliquus (Green alga).